We begin with the raw amino-acid sequence, 296 residues long: 4-hydroxybenzoate octaprenyltransferase (296 aa).

8 consecutive transmembrane segments (helical) span residues 28–48, 55–75, 102–122, 145–167, 174–196, 219–239, 241–261, and 275–295; these read PIGIYLLLWPTLVAVWIAGNG, VLIFALGVVLMRAAGCCINDF, AVMLFALLVGVSFLLVLCTNA, TYYPQVVLGAAYSWGIPMAFTAA, SAWLLYIANLLWTVGYDTYYAMV, VIILTLQLLSLGCLLLAGNRF, LGGWYHLGLLAAAACFAWEFW, and FLHNHWAGMLIFIGVVLDYAL.

The protein belongs to the UbiA prenyltransferase family. The cofactor is Mg(2+).

It is found in the cell inner membrane. It carries out the reaction all-trans-octaprenyl diphosphate + 4-hydroxybenzoate = 4-hydroxy-3-(all-trans-octaprenyl)benzoate + diphosphate. It participates in cofactor biosynthesis; ubiquinone biosynthesis. Functionally, catalyzes the prenylation of para-hydroxybenzoate (PHB) with an all-trans polyprenyl group. Mediates the second step in the final reaction sequence of ubiquinone-8 (UQ-8) biosynthesis, which is the condensation of the polyisoprenoid side chain with PHB, generating the first membrane-bound Q intermediate 3-octaprenyl-4-hydroxybenzoate. The polypeptide is 4-hydroxybenzoate octaprenyltransferase (Pseudomonas entomophila (strain L48)).